The sequence spans 163 residues: ATP synthase subunit b 1 (163 aa).

The helical transmembrane segment at 7–27 threads the bilayer; the sequence is AETWVAIAFVILMGIFAYLGV.

Belongs to the ATPase B chain family. In terms of assembly, F-type ATPases have 2 components, F(1) - the catalytic core - and F(0) - the membrane proton channel. F(1) has five subunits: alpha(3), beta(3), gamma(1), delta(1), epsilon(1). F(0) has three main subunits: a(1), b(2) and c(10-14). The alpha and beta chains form an alternating ring which encloses part of the gamma chain. F(1) is attached to F(0) by a central stalk formed by the gamma and epsilon chains, while a peripheral stalk is formed by the delta and b chains.

The protein resides in the cell inner membrane. In terms of biological role, f(1)F(0) ATP synthase produces ATP from ADP in the presence of a proton or sodium gradient. F-type ATPases consist of two structural domains, F(1) containing the extramembraneous catalytic core and F(0) containing the membrane proton channel, linked together by a central stalk and a peripheral stalk. During catalysis, ATP synthesis in the catalytic domain of F(1) is coupled via a rotary mechanism of the central stalk subunits to proton translocation. Functionally, component of the F(0) channel, it forms part of the peripheral stalk, linking F(1) to F(0). The polypeptide is ATP synthase subunit b 1 (Rhodopseudomonas palustris (strain HaA2)).